Here is a 162-residue protein sequence, read N- to C-terminus: MTRQAVPKPAYEDLVDCQSAMFEWAESFDSKDWDRLSACLAPTLFLDYSDIMGKKWDALPVEEFIGMASSPHFLGNARIKTQHFIGASKWTQPDEGQIVGFHQMRVAHQKYGDDELKQVLYHGHAHGKATTYYRNVGGQWKFAGLVPDVRWTEFDCDKIFEH.

Residue Tyr48 coordinates substrate. Residues His83 and His108 contribute to the active site.

This sequence belongs to the scytalone dehydratase family.

The protein operates within pigment biosynthesis. In terms of biological role, scytalone dehydratase-like protein; part of the gene cluster that mediates the biosynthesis of the bianthraquinone cladofulvin, a conidial pigment not required for virulence but that plays a role in fitness and resistance to environmental stresses including UV light and low-temperature stress. The pathway begins with the synthesis of atrochrysone thioester by the polyketide synthase (PKS) claG. The atrochrysone carboxyl ACP thioesterase claF then breaks the thioester bond and releases the atrochrysone carboxylic acid from claG. This compound is decarboxylated by claH to yield emodin, which is further converted to chrysophanol hydroquinone by the reductase claC and the dehydratase claB. The cytochrome P450 monooxygenase claM then catalyzes the dimerization of nataloe-emodin to cladofulvin. In Passalora fulva (Tomato leaf mold), this protein is Scytalone dehydratase-like protein claB.